Consider the following 210-residue polypeptide: Fibrillarin-like rRNA/tRNA 2'-O-methyltransferase (210 aa).

Residues threonine 70–threonine 71, glutamate 88–tyrosine 89, aspartate 113–alanine 114, and aspartate 133–glutamine 136 each bind S-adenosyl-L-methionine.

Belongs to the methyltransferase superfamily. Fibrillarin family. As to quaternary structure, interacts with nop5. Component of box C/D small ribonucleoprotein (sRNP) particles that contain rpl7ae, FlpA and nop5, plus a guide RNA.

Functionally, involved in pre-rRNA and tRNA processing. Utilizes the methyl donor S-adenosyl-L-methionine to catalyze the site-specific 2'-hydroxyl methylation of ribose moieties in rRNA and tRNA. Site specificity is provided by a guide RNA that base pairs with the substrate. Methylation occurs at a characteristic distance from the sequence involved in base pairing with the guide RNA. This Archaeoglobus fulgidus (strain ATCC 49558 / DSM 4304 / JCM 9628 / NBRC 100126 / VC-16) protein is Fibrillarin-like rRNA/tRNA 2'-O-methyltransferase.